The chain runs to 530 residues: B3 domain-containing protein REM-like 3 (530 aa).

DNA-binding regions (TF-B3) lie at residues lysine 11–serine 103 and aspartate 144–glutamate 241. The disordered stretch occupies residues serine 251–lysine 276. Over residues valine 254–lysine 276 the composition is skewed to basic and acidic residues. DNA-binding regions (TF-B3) lie at residues asparagine 296–glutamate 393 and serine 431–lysine 530.

The protein resides in the nucleus. In Arabidopsis thaliana (Mouse-ear cress), this protein is B3 domain-containing protein REM-like 3.